Reading from the N-terminus, the 363-residue chain is RNA polymerase I-specific transcription initiation factor RRN5 (363 aa).

Residues 301-344 (LSRRDAPPVHQDENQENQENQENQEQDNTASEGESEAERDEIDE) form a disordered region. Residues 302 to 313 (SRRDAPPVHQDE) are compositionally biased toward basic and acidic residues. A compositionally biased stretch (low complexity) spans 317–328 (NQENQENQEQDN). Residues 333-344 (GESEAERDEIDE) show a composition bias toward acidic residues.

As to quaternary structure, component of the UAF (upstream activation factor) complex which consists of UAF30, RRN5, RRN9, RRN10, and histones H3 and H4.

Its subcellular location is the nucleus. It localises to the nucleolus. In terms of biological role, component of the UAF (upstream activation factor) complex which interacts with the upstream element of the RNA polymerase I promoter and forms a stable preinitiation complex. Together with SPT15/TBP UAF seems to stimulate basal transcription to a fully activated level. The protein is RNA polymerase I-specific transcription initiation factor RRN5 (RRN5) of Saccharomyces cerevisiae (strain ATCC 204508 / S288c) (Baker's yeast).